The sequence spans 539 residues: CTP synthase (539 aa).

Residues 1 to 267 (MTKYIFVTGG…DQKVVDFLHI (267 aa)) form an amidoligase domain region. Ser-13 serves as a coordination point for CTP. Ser-13 contacts UTP. ATP is bound at residue 14 to 19 (SLGKGI). Tyr-54 serves as a coordination point for L-glutamine. Position 71 (Asp-71) interacts with ATP. Residues Asp-71 and Glu-141 each contribute to the Mg(2+) site. Residues 148-150 (DME), 188-193 (KSKPTQ), and Lys-224 contribute to the CTP site. Residues 188-193 (KSKPTQ) and Lys-224 contribute to the UTP site. In terms of domain architecture, Glutamine amidotransferase type-1 spans 294–537 (KITLVGKYVE…IGAASGLQVD (244 aa)). Gly-356 contacts L-glutamine. Residue Cys-383 is the Nucleophile; for glutamine hydrolysis of the active site. L-glutamine-binding positions include 384–387 (LGMQ), Glu-407, and Arg-465. Catalysis depends on residues His-510 and Glu-512.

The protein belongs to the CTP synthase family. Homotetramer.

The enzyme catalyses UTP + L-glutamine + ATP + H2O = CTP + L-glutamate + ADP + phosphate + 2 H(+). The catalysed reaction is L-glutamine + H2O = L-glutamate + NH4(+). It catalyses the reaction UTP + NH4(+) + ATP = CTP + ADP + phosphate + 2 H(+). Its pathway is pyrimidine metabolism; CTP biosynthesis via de novo pathway; CTP from UDP: step 2/2. With respect to regulation, allosterically activated by GTP, when glutamine is the substrate; GTP has no effect on the reaction when ammonia is the substrate. The allosteric effector GTP functions by stabilizing the protein conformation that binds the tetrahedral intermediate(s) formed during glutamine hydrolysis. Inhibited by the product CTP, via allosteric rather than competitive inhibition. Catalyzes the ATP-dependent amination of UTP to CTP with either L-glutamine or ammonia as the source of nitrogen. Regulates intracellular CTP levels through interactions with the four ribonucleotide triphosphates. The protein is CTP synthase of Lactobacillus delbrueckii subsp. bulgaricus (strain ATCC BAA-365 / Lb-18).